A 354-amino-acid chain; its full sequence is Neutral protease 2 homolog SNOG_02177 (354 aa).

Positions 1-19 are cleaved as a signal peptide; it reads MKFQILSVAALASLASAVS. A propeptide spanning residues 20–182 is cleaved from the precursor; that stretch reads DALDKRDSPL…WIDLAKRTIV (163 aa). 2 disulfide bridges follow: cysteine 186/cysteine 257 and cysteine 264/cysteine 282. N-linked (GlcNAc...) asparagine glycosylation occurs at asparagine 214. Histidine 306 provides a ligand contact to Zn(2+). The active site involves glutamate 307. Histidine 310 is a Zn(2+) binding site.

This sequence belongs to the peptidase M35 family. It depends on Zn(2+) as a cofactor.

It is found in the secreted. The catalysed reaction is Preferential cleavage of bonds with hydrophobic residues in P1'. Also 3-Asn-|-Gln-4 and 8-Gly-|-Ser-9 bonds in insulin B chain.. In terms of biological role, secreted metalloproteinase that allows assimilation of proteinaceous substrates. Shows high activities on basic nuclear substrates such as histone and protamine. This is Neutral protease 2 homolog SNOG_02177 from Phaeosphaeria nodorum (strain SN15 / ATCC MYA-4574 / FGSC 10173) (Glume blotch fungus).